The chain runs to 301 residues: Multifunctional dioxygenase ausE (301 aa).

Substrate contacts are provided by Arg-72 and Gln-127. Positions 130 and 132 each coordinate Fe cation. Thr-167 is a substrate binding site. Residue His-214 coordinates Fe cation. Residue Arg-226 coordinates substrate.

This sequence belongs to the PhyH family. Homodimer. Fe cation is required as a cofactor.

It carries out the reaction preaustinoid A1 + 2-oxoglutarate + O2 = preaustinoid A2 + succinate + CO2 + H2O. The catalysed reaction is preaustinoid A2 + 2-oxoglutarate + O2 = preaustinoid A3 + succinate + CO2 + H2O. It catalyses the reaction berkeleyone A + 2-oxoglutarate + O2 = preaustinoid A + succinate + CO2 + H2O. It participates in secondary metabolite biosynthesis; terpenoid biosynthesis. Its function is as follows. Multifunctional dioxygenase; part of the gene cluster A that mediates the biosynthesis of the fungal meroterpenoid acetoxydehydroaustin. The first step of the pathway is the synthesis of 3,5-dimethylorsellinic acid by the polyketide synthase ausA. 3,5-dimethylorsellinic acid is then prenylated by the polyprenyl transferase ausN. Further epoxidation by the FAD-dependent monooxygenase ausM and cyclization by the probable terpene cyclase ausL lead to the formation of protoaustinoid A. Protoaustinoid A is then oxidized to spiro-lactone preaustinoid A3 by the combined action of the FAD-binding monooxygenases ausB and ausC, and the dioxygenase ausE. Acid-catalyzed keto-rearrangement and ring contraction of the tetraketide portion of preaustinoid A3 by ausJ lead to the formation of preaustinoid A4. The aldo-keto reductase ausK, with the help of ausH, is involved in the next step by transforming preaustinoid A4 into isoaustinone which is in turn hydroxylated by the P450 monooxygenase ausI to form austinolide. The cytochrome P450 monooxygenase ausG then modifies austinolide to austinol. Austinol is further acetylated to austin by the O-acetyltransferase ausP, which spontaneously changes to dehydroaustin. The cytochrome P450 monooxygenase then converts dehydroaustin is into 7-dehydrodehydroaustin. The hydroxylation catalyzed by ausR permits the second O-acetyltransferase ausQ to add an additional acetyl group to the molecule, leading to the formation of acetoxydehydroaustin. Due to genetic rearrangements of the clusters and the subsequent loss of some enzymes, the end product of the Penicillium brasilianum austinoid biosynthesis clusters is acetoxydehydroaustin. This Penicillium brasilianum protein is Multifunctional dioxygenase ausE.